Consider the following 185-residue polypeptide: Elongation factor P (185 aa).

It belongs to the elongation factor P family.

It localises to the cytoplasm. Its pathway is protein biosynthesis; polypeptide chain elongation. Involved in peptide bond synthesis. Stimulates efficient translation and peptide-bond synthesis on native or reconstituted 70S ribosomes in vitro. Probably functions indirectly by altering the affinity of the ribosome for aminoacyl-tRNA, thus increasing their reactivity as acceptors for peptidyl transferase. The protein is Elongation factor P (efp) of Nostoc sp. (strain PCC 7120 / SAG 25.82 / UTEX 2576).